Consider the following 688-residue polypeptide: Putative proline--tRNA ligase YHR020W (688 aa).

Ser149 carries the post-translational modification Phosphoserine. Thr170 is modified (phosphothreonine). Residues 631 to 650 (ESSAKKDDGEEFEEDDKAPS) are disordered. Position 655 is a phosphoserine (Ser655).

This sequence belongs to the class-II aminoacyl-tRNA synthetase family.

It catalyses the reaction tRNA(Pro) + L-proline + ATP = L-prolyl-tRNA(Pro) + AMP + diphosphate. The sequence is that of Putative proline--tRNA ligase YHR020W from Saccharomyces cerevisiae (strain ATCC 204508 / S288c) (Baker's yeast).